The primary structure comprises 189 residues: Elongation factor P (189 aa).

An N6-(3,6-diaminohexanoyl)-5-hydroxylysine modification is found at Lys-34.

The protein belongs to the elongation factor P family. Post-translationally, may be beta-lysylated on the epsilon-amino group of Lys-34 by the combined action of EpmA and EpmB, and then hydroxylated on the C5 position of the same residue by EpmC (if this protein is present). Lysylation is critical for the stimulatory effect of EF-P on peptide-bond formation. The lysylation moiety may extend toward the peptidyltransferase center and stabilize the terminal 3-CCA end of the tRNA. Hydroxylation of the C5 position on Lys-34 may allow additional potential stabilizing hydrogen-bond interactions with the P-tRNA.

It is found in the cytoplasm. It functions in the pathway protein biosynthesis; polypeptide chain elongation. Involved in peptide bond synthesis. Alleviates ribosome stalling that occurs when 3 or more consecutive Pro residues or the sequence PPG is present in a protein, possibly by augmenting the peptidyl transferase activity of the ribosome. Modification of Lys-34 is required for alleviation. In Saccharophagus degradans (strain 2-40 / ATCC 43961 / DSM 17024), this protein is Elongation factor P.